Here is a 520-residue protein sequence, read N- to C-terminus: Arabinose import ATP-binding protein AraG (520 aa).

A compositionally biased stretch (polar residues) spans 1–10 (MTTQTMTAVS). Positions 1-27 (MTTQTMTAVSGNDGDTGGDAAESPPGG) are disordered. ABC transporter domains are found at residues 30–265 (LALD…MVGR) and 265–516 (RSIE…LIKL). Position 62–69 (62–69 (GENGAGKS)) interacts with ATP.

The protein belongs to the ABC transporter superfamily. Arabinose importer (TC 3.A.1.2.2) family. In terms of assembly, the complex is composed of two ATP-binding proteins (AraG), two transmembrane proteins (AraH) and a solute-binding protein (AraF).

The protein resides in the cell inner membrane. It catalyses the reaction L-arabinose(out) + ATP + H2O = L-arabinose(in) + ADP + phosphate + H(+). Functionally, part of the ABC transporter complex AraFGH involved in L-arabinose import. Responsible for energy coupling to the transport system. The polypeptide is Arabinose import ATP-binding protein AraG (Azospirillum brasilense).